Consider the following 526-residue polypeptide: Phosphoenolpyruvate carboxylase (526 aa).

This sequence belongs to the PEPCase type 2 family. Homotetramer. The cofactor is Mg(2+).

It catalyses the reaction oxaloacetate + phosphate = phosphoenolpyruvate + hydrogencarbonate. In terms of biological role, catalyzes the irreversible beta-carboxylation of phosphoenolpyruvate (PEP) to form oxaloacetate (OAA), a four-carbon dicarboxylic acid source for the tricarboxylic acid cycle. This is Phosphoenolpyruvate carboxylase from Methanosarcina mazei (strain ATCC BAA-159 / DSM 3647 / Goe1 / Go1 / JCM 11833 / OCM 88) (Methanosarcina frisia).